The sequence spans 1006 residues: MDVRCINWFESHGENRFLYLKSRCRNGETVFIRFPHYFYYVVTDEIYQSLSPPPFNARPLGKMRTIDIDETISYNLDIKDRKCSVADMWLIEEPKKRSIQNATMDEFLNISWFYISNGISPDGCYSLDEQYLTKINNGCYHCDDPRNCFAKKIPRFDIPRSYLFLDIECHFDKKFPSVFINPISHTSYCYIDLSGKRLLFTLINEEMLTEQEIQEAVDRGCLRIQSLMEMDYERELVLCSEIVLLRIAKQLLELTFDYVVTFNGHNFDLRYITNRLELLTGEKIIFRSPDKKEAVHLCIYERNQSSHKGVGGMANTTFHVNNNNGTIFFDLYSFIQKSEKLDSYKLDSISKNAFSCMGKVLNRGVREMTFIGDDTTDAKGKAAAFAKVLTTGNYVTVDEDIICKVIRKDIWENGFKVVLSCPTLPNDTYKLSFGKDDVDLAQMYKDYNLNIALDMARYCIHDACLCQYLWEYYGVETKTDAGASTYVLPQSMVFEYRASTVIKGPLLKLLLETKTILVRSETKQKFPYEGGKVFAPKQKMFSNNVLIFDYNSLYPNVCIFGNLSPETLVGVVVSTNRLEEEINNQLLLQKYPPPRYITVHCEPRLPNLISEIAIFDRSIEGTIPRLLRTFLAERARYKKMLKQATSSTEKAIYDSMQYTYKIVANSVYGLMGFRNSALYSYASAKSCTSIGRRMILYLESVLNGAELSNGMLRFANPLSNPFYMDDRDINPIVKTSLPIDYRFRFRSVYGDTDSVFTEIDSQDVDKSIEIAKELERLINNRVLFNNFKIEFEAVYKNLIMQSKKKYTTMKYSASSNSKSVPERINKGTSETRRDVSKFHKNMIKTYKTRLSEMLSEGRMNSNQVCIDILRSLETDLRSEFDSRSSPLELFMLSRMHHSNYKSADNPNMYLVTEYNKNNPETIELGERYYFAYICPANVPWTKKLVNIKTYETIIDRSFKLGSDQRIFYEVYFKRLTSEIVNLLDNKVLCISFFERMFGSKPTFYEA.

This sequence belongs to the DNA polymerase type-B family. In terms of assembly, interacts with OPG148. Component of the Uracil-DNA glycosylase(UDG)-OPG148-polymerase complex; OPG148 and OPG116/UDG form a heterodimeric processivity factor that associates with OPG071 to form the processive polymerase holoenzyme.

The catalysed reaction is DNA(n) + a 2'-deoxyribonucleoside 5'-triphosphate = DNA(n+1) + diphosphate. Its function is as follows. Catalyzes DNA synthesis. Acquires processivity by associating with a heterodimeric processivity factor comprised of the viral OPG148 and OPG116 proteins, thereby forming the DNA polymerase holoenzyme. Displays 3'- to 5' exonuclease activity. Might participate in viral DNA recombination. Does not perform OPG116/D4synthesis across an abasic site. The chain is DNA polymerase (OPG071) from Homo sapiens (Human).